A 1035-amino-acid polypeptide reads, in one-letter code: Putative protein FAM47C (1035 aa).

Disordered regions lie at residues 1 to 21 (MGDQ…TPWY) and 159 to 797 (LEDA…RRVS). Basic and acidic residues predominate over residues 159 to 173 (LEDAGSCEGQEKTTD). The span at 380 to 392 (PEPPKTRVPPLRP) shows a compositional bias: pro residues. The segment covering 478–490 (PPEKDVSHLRPEP) has biased composition (basic and acidic residues). The span at 533-544 (SLHQAPPESSVS) shows a compositional bias: polar residues. Basic and acidic residues-rich tracts occupy residues 611 to 622 (PETRVSHLRPEP), 683 to 694 (PETRVSHLRPEP), and 753 to 766 (EPLE…RPEP).

The protein belongs to the FAM47 family.

The polypeptide is Putative protein FAM47C (FAM47C) (Homo sapiens (Human)).